A 122-amino-acid polypeptide reads, in one-letter code: S-protein homolog 23 (122 aa).

An N-terminal signal peptide occupies residues 1-20 (MQNLSILLVCSFCILGHVSS). N-linked (GlcNAc...) asparagine glycosylation occurs at N86.

The protein belongs to the plant self-incompatibility (S1) protein family.

The protein localises to the secreted. This chain is S-protein homolog 23, found in Arabidopsis thaliana (Mouse-ear cress).